We begin with the raw amino-acid sequence, 564 residues long: Excitatory amino acid transporter 4 (564 aa).

The Cytoplasmic portion of the chain corresponds to 1–55; it reads MSSHGNSLFLRESGQRLGRVGWLQRLQESLQQRALRTRLRLQTMTREHVLRFLRR. S2 bears the Phosphoserine mark. 3 consecutive transmembrane segments (helical) span residues 56–76, 99–119, and 133–153; these read NAFI…AFAL, MLQM…MASL, and VYYM…VTII. N-linked (GlcNAc...) asparagine glycosylation is found at N216, N232, and N239. 3 consecutive transmembrane segments (helical) span residues 262-285, 295-322, and 344-365; these read SANG…IGGV, FFDS…LFLI, and LTVI…YFLI. An intramembrane region (discontinuously helical) is located at residues 371–401; it reads FPFIGGVLQALITAMGTSSSSATLPITFRCL. Residue 388 to 390 coordinates L-aspartate; the sequence is SSS. Residues 411-437 traverse the membrane as a helical segment; the sequence is ITRFVLPVGATVNMDGTALYEALAAIF. Na(+)-binding residues include G419, T421, and N423. L-aspartate contacts are provided by residues T427, 468-472, D501, and N508; that span reads IPQAG. The segment at residues 451-484 is an intramembrane region (discontinuously helical); it reads ITTISITATAASVGAAGIPQAGLVTMVIVLTSVG. A helical membrane pass occupies residues 498–519; the sequence is WFLDRLRTMTNVLGDSIGAAVI. Positions 508 and 512 each coordinate Na(+).

The protein belongs to the dicarboxylate/amino acid:cation symporter (DAACS) (TC 2.A.23) family. SLC1A6 subfamily. In terms of assembly, homotrimer. In terms of tissue distribution, detected in brain, cerebellum and hippocampus.

Its subcellular location is the cell membrane. The catalysed reaction is K(+)(in) + L-glutamate(out) + 3 Na(+)(out) + H(+)(out) = K(+)(out) + L-glutamate(in) + 3 Na(+)(in) + H(+)(in). It carries out the reaction K(+)(in) + L-aspartate(out) + 3 Na(+)(out) + H(+)(out) = K(+)(out) + L-aspartate(in) + 3 Na(+)(in) + H(+)(in). The enzyme catalyses D-aspartate(out) + K(+)(in) + 3 Na(+)(out) + H(+)(out) = D-aspartate(in) + K(+)(out) + 3 Na(+)(in) + H(+)(in). Sodium-dependent, high-affinity amino acid transporter that mediates the uptake of L-glutamate and also L-aspartate and D-aspartate. Functions as a symporter that transports one amino acid molecule together with two or three Na(+) ions and one proton, in parallel with the counter-transport of one K(+) ion. Mediates Cl(-) flux that is not coupled to amino acid transport; this avoids the accumulation of negative charges due to aspartate and Na(+) symport. Plays a redundant role in the rapid removal of released glutamate from the synaptic cleft, which is essential for terminating the postsynaptic action of glutamate. This Canis lupus familiaris (Dog) protein is Excitatory amino acid transporter 4 (SLC1A6).